Reading from the N-terminus, the 286-residue chain is NADPH-dependent 7-cyano-7-deazaguanine reductase (286 aa).

Residue 92–94 (IES) participates in substrate binding. Residue 94–95 (SK) participates in NADPH binding. Cysteine 194 acts as the Thioimide intermediate in catalysis. Aspartate 201 acts as the Proton donor in catalysis. 233–234 (HE) contacts substrate. 262 to 263 (RG) lines the NADPH pocket.

The protein belongs to the GTP cyclohydrolase I family. QueF type 2 subfamily. Homodimer.

It is found in the cytoplasm. The enzyme catalyses 7-aminomethyl-7-carbaguanine + 2 NADP(+) = 7-cyano-7-deazaguanine + 2 NADPH + 3 H(+). It functions in the pathway tRNA modification; tRNA-queuosine biosynthesis. Its function is as follows. Catalyzes the NADPH-dependent reduction of 7-cyano-7-deazaguanine (preQ0) to 7-aminomethyl-7-deazaguanine (preQ1). This is NADPH-dependent 7-cyano-7-deazaguanine reductase from Shewanella oneidensis (strain ATCC 700550 / JCM 31522 / CIP 106686 / LMG 19005 / NCIMB 14063 / MR-1).